Reading from the N-terminus, the 146-residue chain is Endoribonuclease YbeY (146 aa).

Positions 108, 112, and 118 each coordinate Zn(2+).

The protein belongs to the endoribonuclease YbeY family. Zn(2+) is required as a cofactor.

Its subcellular location is the cytoplasm. Functionally, single strand-specific metallo-endoribonuclease involved in late-stage 70S ribosome quality control and in maturation of the 3' terminus of the 16S rRNA. This is Endoribonuclease YbeY from Aster yellows witches'-broom phytoplasma (strain AYWB).